A 239-amino-acid chain; its full sequence is tRNA (guanine-N(7)-)-methyltransferase (239 aa).

Glutamate 68, glutamate 93, aspartate 120, and aspartate 143 together coordinate S-adenosyl-L-methionine. Residue aspartate 143 is part of the active site. Substrate is bound by residues lysine 147, aspartate 180, and 217 to 220 (TKFE).

The protein belongs to the class I-like SAM-binding methyltransferase superfamily. TrmB family.

It catalyses the reaction guanosine(46) in tRNA + S-adenosyl-L-methionine = N(7)-methylguanosine(46) in tRNA + S-adenosyl-L-homocysteine. It functions in the pathway tRNA modification; N(7)-methylguanine-tRNA biosynthesis. Catalyzes the formation of N(7)-methylguanine at position 46 (m7G46) in tRNA. The sequence is that of tRNA (guanine-N(7)-)-methyltransferase from Vibrio cholerae serotype O1 (strain ATCC 39315 / El Tor Inaba N16961).